Reading from the N-terminus, the 460-residue chain is MAETTPKVKGHVVILPYPVQGHLNPMVQFAKRLVSKNVKVTIATTTYTASSITTPSLSVEPISDGFDFIPIGIPGFSVDTYSESFKLNGSETLTLLIEKFKSTDSPIDCLIYDSFLPWGLEVARSMELSAASFFTNNLTVCSVLRKFSNGDFPLPADPNSAPFRIRGLPSLSYDELPSFVGRHWLTHPEHGRVLLNQFPNHENADWLFVNGFEGLEETQDCENGESDAMKATLIGPMIPSAYLDDRMEDDKDYGASLLKPISKECMEWLETKQAQSVAFVSFGSFGILFEKQLAEVAIALQESDLNFLWVIKEAHIAKLPEGFVESTKDRALLVSWCNQLEVLAHESIGCFLTHCGWNSTLEGLSLGVPMVGVPQWSDQMNDAKFVEEVWKVGYRAKEEAGEVIVKSEELVRCLKGVMEGESSVKIRESSKKWKDLAVKAMSEGGSSDRSINEFIESLGK.

The active-site Proton acceptor is the H22. H22 contacts an anthocyanidin. The active-site Charge relay is the D113. UDP-alpha-D-glucose contacts are provided by T135, Q339, H354, W357, N358, S359, E362, D378, and Q379.

Belongs to the UDP-glycosyltransferase family. In terms of tissue distribution, expressed in the vasculature, the apical meristems of roots, shoots and inflorescence, and the junction of organ or branches.

It catalyses the reaction (Z)-2-phenyl-1-thioacetohydroximate + UDP-alpha-D-glucose = (Z)-desulfoglucotropeolin + UDP. The catalysed reaction is a (Z)-omega-(methylsulfanyl)alkyl-thiohydroximate + UDP-alpha-D-glucose = an aliphatic (Z)-desulfo-glucosinolate + UDP. The enzyme catalyses (Z)-2-(indol-3-yl)-1-thioacetohydroximate + UDP-alpha-D-glucose = (Z)-indolylmethyl desulfoglucosinolate + UDP. Involved in the biosynthesis of glucosinolate. In in vitro assay, may use phenylacetothiohydroximate (PATH), but not phenylacetic acid (PAA), indole-3-acetic acid (IAA) or salicylic acid (SA) as substrate. Specific for the thiohydroximate functional group and does not glucosylate the carboxylate group or a hydroxyl group. In Arabidopsis thaliana (Mouse-ear cress), this protein is UDP-glycosyltransferase 74B1 (UGT74B1).